Reading from the N-terminus, the 279-residue chain is 2'-N-acetylparomamine deacetylase (279 aa).

Zn(2+) contacts are provided by His-31, Asp-34, and His-157. Positions 245–279 (PRRWTGGTAGAGHAAGRRGAPHTERVWTPAPAGAR) are disordered. The span at 246–258 (RRWTGGTAGAGHA) shows a compositional bias: low complexity.

This sequence belongs to the PIGL family. The cofactor is Zn(2+).

It catalyses the reaction 2'-N-acetylparomamine + H2O = paromamine + acetate. The enzyme catalyses 2'''-acetyl-6'''-hydroxyneomycin C + H2O = 6'''-deamino-6'''-hydroxyneomycin C + acetate. It participates in antibiotic biosynthesis; neomycin biosynthesis. Functionally, deacetylase involved in the biosynthesis of neomycin by mediating 2 steps of the pathway. Deacetylates both 2'-N-acetylparomamine and 2'''-acetyl-6'''-hydroxyneomycin C. This chain is 2'-N-acetylparomamine deacetylase (neoL), found in Streptomyces fradiae (Streptomyces roseoflavus).